The sequence spans 293 residues: 33 kDa chaperonin (293 aa).

2 disulfide bridges follow: C238/C240 and C271/C274.

Belongs to the HSP33 family. Under oxidizing conditions two disulfide bonds are formed involving the reactive cysteines. Under reducing conditions zinc is bound to the reactive cysteines and the protein is inactive.

The protein resides in the cytoplasm. Its function is as follows. Redox regulated molecular chaperone. Protects both thermally unfolding and oxidatively damaged proteins from irreversible aggregation. Plays an important role in the bacterial defense system toward oxidative stress. This Clostridium beijerinckii (strain ATCC 51743 / NCIMB 8052) (Clostridium acetobutylicum) protein is 33 kDa chaperonin.